The following is a 539-amino-acid chain: Chaperonin GroEL (539 aa).

ATP is bound by residues 29–32 (TLGP), 86–90 (DGTTT), glycine 413, 477–479 (NAA), and aspartate 493.

This sequence belongs to the chaperonin (HSP60) family. As to quaternary structure, forms a cylinder of 14 subunits composed of two heptameric rings stacked back-to-back. Interacts with the co-chaperonin GroES.

The protein resides in the cytoplasm. The catalysed reaction is ATP + H2O + a folded polypeptide = ADP + phosphate + an unfolded polypeptide.. Together with its co-chaperonin GroES, plays an essential role in assisting protein folding. The GroEL-GroES system forms a nano-cage that allows encapsulation of the non-native substrate proteins and provides a physical environment optimized to promote and accelerate protein folding. The protein is Chaperonin GroEL of Clavibacter michiganensis subsp. michiganensis (strain NCPPB 382).